The sequence spans 399 residues: Tyrosine--tRNA ligase (399 aa).

The 'HIGH' region motif lies at 44–53; it reads PTAPDLHLGH. Positions 229–233 match the 'KMSKS' region motif; it reads KMSKS. An ATP-binding site is contributed by Lys-232. Positions 338-398 constitute an S4 RNA-binding domain; the sequence is ISITKALVDC…GKRKFAKLKV (61 aa).

Belongs to the class-I aminoacyl-tRNA synthetase family. TyrS type 2 subfamily. In terms of assembly, homodimer.

It is found in the cytoplasm. It carries out the reaction tRNA(Tyr) + L-tyrosine + ATP = L-tyrosyl-tRNA(Tyr) + AMP + diphosphate + H(+). Functionally, catalyzes the attachment of tyrosine to tRNA(Tyr) in a two-step reaction: tyrosine is first activated by ATP to form Tyr-AMP and then transferred to the acceptor end of tRNA(Tyr). This chain is Tyrosine--tRNA ligase, found in Sulfurimonas denitrificans (strain ATCC 33889 / DSM 1251) (Thiomicrospira denitrificans (strain ATCC 33889 / DSM 1251)).